The sequence spans 125 residues: Large ribosomal subunit protein bL17 (125 aa).

The protein belongs to the bacterial ribosomal protein bL17 family. In terms of assembly, part of the 50S ribosomal subunit. Contacts protein L32.

This Syntrophus aciditrophicus (strain SB) protein is Large ribosomal subunit protein bL17.